Reading from the N-terminus, the 420-residue chain is UDP-N-acetylglucosamine 1-carboxyvinyltransferase (420 aa).

Position 22–23 (22–23 (KN)) interacts with phosphoenolpyruvate. Arg-93 contributes to the UDP-N-acetyl-alpha-D-glucosamine binding site. Residue Cys-117 is the Proton donor of the active site. The residue at position 117 (Cys-117) is a 2-(S-cysteinyl)pyruvic acid O-phosphothioketal. Positions 306 and 328 each coordinate UDP-N-acetyl-alpha-D-glucosamine.

The protein belongs to the EPSP synthase family. MurA subfamily.

The protein resides in the cytoplasm. The catalysed reaction is phosphoenolpyruvate + UDP-N-acetyl-alpha-D-glucosamine = UDP-N-acetyl-3-O-(1-carboxyvinyl)-alpha-D-glucosamine + phosphate. It participates in cell wall biogenesis; peptidoglycan biosynthesis. Functionally, cell wall formation. Adds enolpyruvyl to UDP-N-acetylglucosamine. The polypeptide is UDP-N-acetylglucosamine 1-carboxyvinyltransferase (Colwellia psychrerythraea (strain 34H / ATCC BAA-681) (Vibrio psychroerythus)).